Reading from the N-terminus, the 575-residue chain is MVAKLEQLIAQTILQGFDAQYGRFLEVTAGAQHRFEQADWHAVQQAMKKRIHLYDHHVGLVVEQLKYITDQRHFDVEFLARVKEIYTGLLPDYPRFEIAESFFNSVYCRLFKHRDLTPDKLFVFSSQPERRFREIPRPLARDFIPKGDLSGMLQMVLNDLSLRLPWENLSRDIDYIVMAIRQAFTDEQLASAHFQIANELFYRNKAAWLVGKLRLNGDIYPFLLPIHHNESGELFIDTCLTSKAEASIVFGFARSYFMVYVPLPAAMVEWLREILPGKSTAELYTAIGCQKHGKTESYREYLAFIHQSSEQFIIAPGVKGMVMLVFTLPSFDRVFKVIKDQFAPQKEVTQARVLECYQLVKEHDRVGRMADTQEYENFVIDKHRISPELLAELQHEVPEKLEDLGDKIVIKHLYMERRMTPLNLYMEQADDQQLKDAIEEYGNAIKQLAAANIFPGDMLFKNFGVTRHGRVVFYDYDEICYMTEVNFRDIPPPRYPEDEMASEPWYSVSPNDVFPEEFRHFLCSDRKVRHFFEEMHGDLFQASYWRGLQQRIRDGHVEDVFAYRRKQRFSQRALN.

Residues 315–321 (APGVKGM) and Lys336 contribute to the ATP site. Asp371 is an active-site residue.

This sequence belongs to the AceK family.

The protein resides in the cytoplasm. The enzyme catalyses L-seryl-[isocitrate dehydrogenase] + ATP = O-phospho-L-seryl-[isocitrate dehydrogenase] + ADP + H(+). Its function is as follows. Bifunctional enzyme which can phosphorylate or dephosphorylate isocitrate dehydrogenase (IDH) on a specific serine residue. This is a regulatory mechanism which enables bacteria to bypass the Krebs cycle via the glyoxylate shunt in response to the source of carbon. When bacteria are grown on glucose, IDH is fully active and unphosphorylated, but when grown on acetate or ethanol, the activity of IDH declines drastically concomitant with its phosphorylation. This chain is Isocitrate dehydrogenase kinase/phosphatase, found in Yersinia pseudotuberculosis serotype I (strain IP32953).